A 555-amino-acid polypeptide reads, in one-letter code: Protein NRT1/ PTR FAMILY 2.1 (555 aa).

The next 12 helical transmembrane spans lie at 32–52 (TLLGISVTSYGWVLNLIVFLI), 68–88 (IVNGCLSMLPVVTAILADSFF), 91–111 (IPVISASAFISLLGIFLLTLI), 127–147 (ILCQSPSKLHLGVLYAALALV), 175–195 (FFNWYFLTVNTGAIISATAIV), 205–225 (LGFGLCAAANLISFIVFISGK), 324–344 (VLPLWLAILFVGTSIGVQASM), 369–389 (VIVLISSCVFLVLNNWTIYPI), 401–421 (LQQVGIGQVFNILSMAISAIV), 437–457 (VLWLLPPLVIVGIGDAFHYMA), 476–496 (SVTSVAFGISFYLSTALINLI), and 517–537 (WVLVIGGVLNLGYFFVCSWYF).

This sequence belongs to the major facilitator superfamily. Proton-dependent oligopeptide transporter (POT/PTR) (TC 2.A.17) family. As to expression, expressed in roots.

Its subcellular location is the membrane. In terms of biological role, transporter involved in a passive nitrate efflux. The chain is Protein NRT1/ PTR FAMILY 2.1 (NPF2.1) from Arabidopsis thaliana (Mouse-ear cress).